A 404-amino-acid polypeptide reads, in one-letter code: uncharacterized protein (404 aa).

A run of 11 helical transmembrane segments spans residues 15–35 (WSLL…PGFL), 43–63 (NTLA…DIFA), 84–104 (MVLP…GLAF), 121–141 (GITP…IFVI), 154–174 (IAGF…APPV), 187–207 (ISIF…ITFA), 231–251 (VVGI…VLGV), 279–299 (IFGL…AYTS), 316–336 (GIII…GQPA), 338–358 (ILVL…GTLL), and 373–393 (PLWL…MGIY).

The protein belongs to the NRAMP family.

The protein localises to the cell membrane. This is an uncharacterized protein from Bacillus subtilis (strain 168).